Here is a 365-residue protein sequence, read N- to C-terminus: Putative nudix hydrolase 1 (365 aa).

The 130-residue stretch at 72–201 (VNYVAAAIIL…DFIRLVDEAV (130 aa)) folds into the Nudix hydrolase domain. Residues 109-130 (GRVEAGETIEEAVVREVKEETG) carry the Nudix box motif. Mg(2+) contacts are provided by glutamate 124 and glutamate 128.

The protein belongs to the Nudix hydrolase family. Requires Mg(2+) as cofactor. Mn(2+) is required as a cofactor.

Functionally, probably mediates the hydrolysis of some nucleoside diphosphate derivatives. This Caenorhabditis elegans protein is Putative nudix hydrolase 1 (ndx-1).